Consider the following 227-residue polypeptide: A-type potassium channel modulatory protein KCNIP1 (227 aa).

The EF-hand 1; degenerate domain maps to 38–94; that stretch reads LEMTMVCHRPEGLEQLEAQTNFTKRELQVLYRGFKNECPSGVVNEDTFKQIYAQFFP. 3 consecutive EF-hand domains span residues 97 to 132, 133 to 168, and 181 to 216; these read DAST…LLRG, TVHE…IYDM, and TPRQ…DDNI. 9 residues coordinate Ca(2+): Asp-146, Asn-148, Asp-150, Tyr-152, Glu-157, Asp-194, Asn-196, Asp-198, and Glu-205. The tract at residues 214–227 is interaction with KCND2; the sequence is DNIMRSLQLFQNVM.

Belongs to the recoverin family. Component of heteromultimeric potassium channels. Identified in potassium channel complexes containing KCND1, KCND2, KCND3, KCNIP1, KCNIP2, KCNIP3, KCNIP4, DPP6 and DPP10. Part of a heterooctamer composed of the tetrameric channel and four KCNIP1 chains. Probably part of a complex consisting of KCNIP1, KCNIP2 isoform 3 and KCND2. Self-associates to form homodimers and homotetramers. Interacts with KCNIP2 isoform 3 in a calcium-dependent manner. Interacts with Naja atra venom CTX3. Interacts with KCND2; this interaction mediates the capture of both the N- and C-terminus of KCND2, thus preventing KCND2 N-type inactivation and modulates the channel gating kinetics. Interacts with KCND3; each KCNIP1 monomer interacts with two adjacent KCND3 subunits, through both the N-terminal inactivation ball of a KCND3 subunit and a C-terminal helix from the adjacent KCND3 subunit, clamping them together; this interaction stabilizes the tetrameric form and modulates the channel gating kinetics namely channel activation and inactivation kinetics and rate of recovery from inactivation. In terms of tissue distribution, isoform 1 and isoform 2 are expressed in brain and kidney. Isoform 1 is also expressed in liver, pancreas, skeletal muscle, small intestine and testis. Isoform 2 is also expressed in lung, pancreas, leukocytes, prostate and thymus.

The protein resides in the cell membrane. It is found in the cytoplasm. Its subcellular location is the cell projection. The protein localises to the dendrite. Functionally, regulatory subunit of Kv4/D (Shal)-type voltage-gated rapidly inactivating A-type potassium channels. Regulates channel density, inactivation kinetics and rate of recovery from inactivation in a calcium-dependent and isoform-specific manner. In vitro, modulates KCND1/Kv4.1 and KCND2/Kv4.2 currents. Increases the presence of KCND2 at the cell surface. This Homo sapiens (Human) protein is A-type potassium channel modulatory protein KCNIP1.